The sequence spans 116 residues: Mitochondrial import inner membrane translocase subunit PAM16 like 2 (116 aa).

The N-terminal 27 residues, 1–27 (MAGRLLANLIVMGSGIIGRAVFQAYRQ), are a transit peptide targeting the mitochondrion. Residues 57–106 (EARQILGVTEKTSWEEILQKYDKLFENNAKAGSFYLQSKVHRAKECLEVV) are J-like.

It belongs to the TIM16/PAM16 family. Expressed constitutively and ubiquitously, except in root tips, at low levels.

It localises to the mitochondrion inner membrane. It is found in the cytoplasm. Functionally, regulates ATP-dependent protein translocation into the mitochondrial matrix. Involved in the uptake of thaxtomin, a phytotoxin produced by Streptomyces bacteria, that causes dramatic cell swelling, reduced seedling growth, and inhibition of cellulose synthesis. Modulates polar auxin transport. Involved in importing a negative regulator of plant immunity into mitochondria, thus protecting plants from over-accumulation of reactive oxygen species (ROS) and preventing autoimmunity. Confers sensitivity to virulent pathogens such as the oomycete H.arabidopsidis Noco2 and the bacteria P.syringae pv. maculicola ES4326. This is Mitochondrial import inner membrane translocase subunit PAM16 like 2 from Arabidopsis thaliana (Mouse-ear cress).